Consider the following 946-residue polypeptide: Inositol-trisphosphate 3-kinase B (946 aa).

5 disordered regions span residues 19-128 (EMKS…EEAK), 156-288 (AQSS…TRSC), 308-472 (ARVT…GIPS), 486-561 (KDLK…RKAC), and 580-638 (GALE…HTLD). 3 positions are modified to phosphoserine: S43, S49, and S71. Low complexity predominate over residues 83-105 (NSSSGSGSGSSGSSVSSPSWAGR). A phosphoserine mark is found at S204 and S269. The segment covering 396–411 (TTVSVQSAESSDSLSW) has biased composition (polar residues). A compositionally biased stretch (low complexity) spans 445 to 458 (GGSPTLGLLGGSPS). A compositionally biased stretch (polar residues) spans 524 to 534 (TGVQSEGTWES). Positions 599-612 (SSSSASSTGFSSSY) are enriched in low complexity. Residues S679, K690, 730 to 732 (DDL), and D743 each bind ATP. Substrate contacts are provided by K745 and R766. The segment at 768-776 (DMYQKMIEV) is calmodulin-binding. 793 to 800 (KPRYMQWR) is a substrate binding site. The ATP site is built by K817 and D897. K900 serves as a coordination point for substrate.

Belongs to the inositol phosphokinase (IPK) family. In terms of assembly, interacts with DMTN.

Its subcellular location is the cytoplasm. The protein resides in the cytoskeleton. The protein localises to the endoplasmic reticulum. The catalysed reaction is 1D-myo-inositol 1,4,5-trisphosphate + ATP = 1D-myo-inositol 1,3,4,5-tetrakisphosphate + ADP + H(+). With respect to regulation, IP3K is activated by calcium and calmodulin. Form B is much more sensitive to calcium/calmodulin than form A. In terms of biological role, catalyzes the phosphorylation of 1D-myo-inositol 1,4,5-trisphosphate (InsP3) into 1D-myo-inositol 1,3,4,5-tetrakisphosphate and participates to the regulation of calcium homeostasis. The polypeptide is Inositol-trisphosphate 3-kinase B (Homo sapiens (Human)).